The chain runs to 418 residues: MLDPHILRSRPKDVSDMLQARNVDFDLDALLDADERRRYFMQLADDMRQERNFAGRQVAQFKRDGVDTTAAIKEMKDLSEKLYQAEGEQQSAESEYLELAWTIPNMIDKSVPRGPDETANVVLRKWVGTPTPSVPKGHEELAVGRGLLDMKRAAKVSGARFYYLKGSLVRLNQALISHSLDFLGSRGYTLVQPPYLIRRNAMEGAIIAEDFEDVIYKIEDDDLYLIGTSEHAMAAMHSDEIIEGGLPLRYAGVSPCFRKEAGAHGKDQKGIFRVHQFDKIEQFVFSKPEDSWREHDRMLEITEEFYQGLGIPYRVVLLSSGDMGKVSAKTYDIECWMAAQDAYREVVSCSNCLDFQSRRLKVRFRDRTDEDTQYVHTLNSTLAATSRLLACIIENFQEADGTIRVPQPLQKYVGKEAI.

228–230 (TSE) is a binding site for L-serine. ATP is bound by residues 258–260 (RKE) and V274. Position 281 (E281) interacts with L-serine. An ATP-binding site is contributed by 345 to 348 (EVVS). An L-serine-binding site is contributed by T381.

This sequence belongs to the class-II aminoacyl-tRNA synthetase family. Type-1 seryl-tRNA synthetase subfamily. Homodimer. The tRNA molecule binds across the dimer.

The protein resides in the cytoplasm. The enzyme catalyses tRNA(Ser) + L-serine + ATP = L-seryl-tRNA(Ser) + AMP + diphosphate + H(+). It catalyses the reaction tRNA(Sec) + L-serine + ATP = L-seryl-tRNA(Sec) + AMP + diphosphate + H(+). Its pathway is aminoacyl-tRNA biosynthesis; selenocysteinyl-tRNA(Sec) biosynthesis; L-seryl-tRNA(Sec) from L-serine and tRNA(Sec): step 1/1. Functionally, catalyzes the attachment of serine to tRNA(Ser). Is also able to aminoacylate tRNA(Sec) with serine, to form the misacylated tRNA L-seryl-tRNA(Sec), which will be further converted into selenocysteinyl-tRNA(Sec). The chain is Serine--tRNA ligase from Cenarchaeum symbiosum (strain A).